The primary structure comprises 727 residues: Probable metal-nicotianamine transporter YSL14 (727 aa).

Composition is skewed to low complexity over residues 1–10 and 18–27; these read MAQHTAAAAG and AEAAAAAAAG. Residues 1–61 are disordered; sequence MAQHTAAAAG…RNGGADDPDA (61 aa). Over residues 45-54 the composition is skewed to gly residues; the sequence is AGGGGGGRNG. A run of 14 helical transmembrane segments spans residues 84-104, 107-127, 152-172, 194-214, 256-276, 314-334, 359-379, 432-452, 460-480, 492-512, 546-566, 604-624, 646-666, and 681-701; these read AFVVSALLAVMFSVIVMKLNL, GIIPSLNVSAGLLGFFFVRLW, CVVSAYGIAFSGGFGSYLFGM, LGWMIGFLFLVSFIGLFALVP, LGKYFLFSFFWGFFQWFYTAG, IVNVSVLLGGILSWGVMWPLI, VFISIALILGDGLYNFLKVLI, VAYGGYVVVAALSIGTLPEIF, ILVAYIVAPVLAFCNAYGSGL, LAIFVFGAWAGLSHGGVLVGL, FISQVIGTGMGCVIAPCVFWL, PENCLTLCYIFFAAAIAINLI, FYIGSYFAIDMFLGSVILFVW, and VASGLICGDGIWTLPQSILAL.

This sequence belongs to the YSL (TC 2.A.67.2) family. In terms of tissue distribution, expressed in leaves and at low levels in roots.

Its subcellular location is the membrane. In terms of biological role, may be involved in the transport of nicotianamine-chelated metals. In Oryza sativa subsp. japonica (Rice), this protein is Probable metal-nicotianamine transporter YSL14 (YSL14).